The chain runs to 199 residues: Minor spike protein H (199 aa).

The disordered stretch occupies residues 171–199; the sequence is EDSNGPRLSNLREEKKPNQMPLKNGKLNT.

The protein belongs to the microviridae H protein family.

It is found in the virion. Its function is as follows. Probably triggers with protein G the injection of the phage DNA into the host upon conformational changes induced by virus-host receptor interaction. The polypeptide is Minor spike protein H (Bdellovibrio bacteriovorus (Bacteriophage phiMH2K)).